Reading from the N-terminus, the 133-residue chain is Fluoride-specific ion channel FluC (133 aa).

A run of 4 helical transmembrane segments spans residues 4–24, 35–55, 66–86, and 107–127; these read LLWI…LSVL, WGTL…WVLA, VFIF…SLES, and VLGL…LGGP. The Na(+) site is built by G74 and T77.

The protein belongs to the fluoride channel Fluc/FEX (TC 1.A.43) family.

It localises to the cell inner membrane. It catalyses the reaction fluoride(in) = fluoride(out). Its activity is regulated as follows. Na(+) is not transported, but it plays an essential structural role and its presence is essential for fluoride channel function. Functionally, fluoride-specific ion channel. Important for reducing fluoride concentration in the cell, thus reducing its toxicity. The polypeptide is Fluoride-specific ion channel FluC (Salinibacter ruber (strain DSM 13855 / M31)).